The sequence spans 81 residues: Centromere protein X (81 aa).

At methionine 1 the chain carries N-acetylmethionine.

Belongs to the CENP-X/MHF2 family. In terms of assembly, heterodimer with CENPX, sometimes called MHF; this interaction stabilizes both partners. MHF heterodimers can assemble to form tetrameric structures. MHF also coassemble with CENPT-CENPW heterodimers at centromeres to form the tetrameric CENP-T-W-S-X complex. Forms a discrete complex with FANCM and CENPX, called FANCM-MHF; this interaction, probably mediated by direct binding between CENPS and FANCM, leads to synergistic activation of double-stranded DNA binding and strongly stimulates FANCM-mediated DNA remodeling. Recruited by FANCM to the Fanconi anemia (FA) core complex, which consists of CENPS, CENPX, FANCA, FANCB, FANCC, FANCE, FANCF, FANCG, FANCL, FANCM, FAAP24 and FAAP100. The FA core complex associates with Bloom syndrome (BLM) complex, which consists of at least BLM, DNA topoisomerase 3-alpha (TOP3A), RMI1/BLAP75, RPA1/RPA70 and RPA2/RPA32. The super complex between FA and BLM is called BRAFT.

Its subcellular location is the nucleus. The protein localises to the chromosome. It localises to the centromere. The protein resides in the kinetochore. Its function is as follows. DNA-binding component of the Fanconi anemia (FA) core complex. Required for the normal activation of the FA pathway, leading to monoubiquitination of the FANCI-FANCD2 complex in response to DNA damage, cellular resistance to DNA cross-linking drugs, and prevention of chromosomal breakage. In complex with CENPS (MHF heterodimer), crucial cofactor for FANCM in both binding and ATP-dependent remodeling of DNA. Stabilizes FANCM. In complex with CENPS and FANCM (but not other FANC proteins), rapidly recruited to blocked forks and promotes gene conversion at blocked replication forks. In complex with CENPS, CENPT and CENPW (CENP-T-W-S-X heterotetramer), involved in the formation of a functional kinetochore outer plate, which is essential for kinetochore-microtubule attachment and faithful mitotic progression. As a component of MHF and CENP-T-W-S-X complexes, binds DNA and bends it to form a nucleosome-like structure. DNA-binding function is fulfilled in the presence of CENPS, with the following preference for DNA substates: Holliday junction &gt; double-stranded &gt; splay arm &gt; single-stranded. Does not bind DNA on its own. In Pongo abelii (Sumatran orangutan), this protein is Centromere protein X (CENPX).